A 322-amino-acid polypeptide reads, in one-letter code: uncharacterized protein (322 aa).

Disordered regions lie at residues 1 to 51 and 107 to 130; these read MARS…GAWA and QERQ…DRPD. The span at 119-130 shows a compositional bias: basic and acidic residues; that stretch reads LHLEPGNEDRPD.

Expressed in skin and fetal lung.

This is an uncharacterized protein from Homo sapiens (Human).